The primary structure comprises 358 residues: Fructose-bisphosphate aldolase 6, cytosolic (358 aa).

At Ser2 the chain carries N-acetylserine. A substrate-binding site is contributed by Arg39. The residue at position 68 (Cys68) is an S-glutathionyl cysteine; transient. Cys173 carries the S-glutathionyl cysteine; transient; alternate modification. The residue at position 173 (Cys173) is an S-nitrosocysteine; transient; alternate. Glu183 acts as the Proton acceptor in catalysis. Lys225 serves as the catalytic Schiff-base intermediate with dihydroxyacetone-P. Substrate contacts are provided by residues 266 to 268 (SGG) and Arg298. The residue at position 350 (Ser350) is a Phosphoserine. Lys354 bears the N6,N6,N6-trimethyllysine mark.

It belongs to the class I fructose-bisphosphate aldolase family. As to quaternary structure, homotetramer. Interacts with TRX1 and TRX3. Interacts with GAPC1 and VDAC3. In terms of processing, S-glutathionylated at Cys-68 and Cys-173. S-nitrosylated at Cys-173. Expressed in roots, rosettes leaves, cauline leaves, stems and flowers.

Its subcellular location is the cytoplasm. The protein resides in the cytosol. It localises to the nucleus. It is found in the mitochondrion. It catalyses the reaction beta-D-fructose 1,6-bisphosphate = D-glyceraldehyde 3-phosphate + dihydroxyacetone phosphate. It functions in the pathway carbohydrate degradation; glycolysis; D-glyceraldehyde 3-phosphate and glycerone phosphate from D-glucose: step 4/4. Total and irreversible inhibition by S-nitrosoglutathione (GSNO). Partial and reversible inhibition by oxidized glutathione (GSSG). Fructose-bisphosphate aldolase that plays a key role in glycolysis and gluconeogenesis. Associates with GAPC1 to the outer mitochondrial membrane, in a redox-dependent manner, leading to binding and bundling of actin. Actin binding and bundling occurs under oxidizing conditions and is reversible under reducing conditions. May be part of a redox-dependent retrograde signal transduction network for adaptation upon oxidative stress. The sequence is that of Fructose-bisphosphate aldolase 6, cytosolic from Arabidopsis thaliana (Mouse-ear cress).